Consider the following 965-residue polypeptide: FKBP12-associated protein 1 (965 aa).

The RING-type; degenerate zinc finger occupies 68–118; the sequence is CMICTVEMDYTCQMFACKRCYRVFDYGCIREWALKSTEKTVDRIWKCPNCY. 5 NF-X1-type zinc fingers span residues 159-177, 216-235, 362-382, 468-487, and 586-606; these read CMHGCSKICHLGPHPECTR, CSIHTCKKKCHPGLCGPCPE, CGKHSCPFTCHDKACMEPCLQ, CGIHKCQRKCHPGKCPPCLE, and CYHTCQKTCHLPGNCQKVCKQ. Residues 733–796 enclose the R3H domain; it reads ERWCSQIEAI…MRSVFIKKED (64 aa). Thr-951 carries the phosphothreonine modification. Phosphoserine is present on Ser-958.

It belongs to the NFX1 family. In terms of assembly, interacts with FPR1.

The protein localises to the cytoplasm. It localises to the nucleus. Its function is as follows. May play a role in transcription regulation. In Saccharomyces cerevisiae (strain ATCC 204508 / S288c) (Baker's yeast), this protein is FKBP12-associated protein 1 (FAP1).